The sequence spans 190 residues: Xanthine phosphoribosyltransferase (190 aa).

Residues leucine 20 and asparagine 27 each coordinate xanthine. Position 128 to 132 (128 to 132 (ANGNA)) interacts with 5-phospho-alpha-D-ribose 1-diphosphate. Residue lysine 156 participates in xanthine binding.

The protein belongs to the purine/pyrimidine phosphoribosyltransferase family. Xpt subfamily. In terms of assembly, homodimer.

Its subcellular location is the cytoplasm. The catalysed reaction is XMP + diphosphate = xanthine + 5-phospho-alpha-D-ribose 1-diphosphate. It participates in purine metabolism; XMP biosynthesis via salvage pathway; XMP from xanthine: step 1/1. Converts the preformed base xanthine, a product of nucleic acid breakdown, to xanthosine 5'-monophosphate (XMP), so it can be reused for RNA or DNA synthesis. This chain is Xanthine phosphoribosyltransferase, found in Clostridium novyi (strain NT).